We begin with the raw amino-acid sequence, 483 residues long: Regulatory protein ViaA (483 aa).

The protein belongs to the ViaA family. Homodimer. Interacts with RavA.

The protein localises to the cytoplasm. Its function is as follows. Component of the RavA-ViaA chaperone complex, which may act on the membrane to optimize the function of some of the respiratory chains. ViaA stimulates the ATPase activity of RavA. The polypeptide is Regulatory protein ViaA (Cronobacter sakazakii (strain ATCC BAA-894) (Enterobacter sakazakii)).